Reading from the N-terminus, the 94-residue chain is uncharacterized protein (94 aa).

The N-terminal stretch at 1–22 is a signal peptide; that stretch reads MIMKNCLLLGALLMGFTGVAMA.

This is an uncharacterized protein from Escherichia coli (strain K12).